A 901-amino-acid chain; its full sequence is Bifunctional protein STORR (901 aa).

A helical transmembrane segment spans residues 12–32 (TSSVVALLLALVSILSSVVVL). C513 contributes to the heme binding site.

In the N-terminal section; belongs to the cytochrome P450 family. This sequence in the C-terminal section; belongs to the aldo/keto reductase family. Heme serves as cofactor.

The protein resides in the membrane. The catalysed reaction is (R)-reticuline + NADP(+) = 1,2-dehydroreticuline + NADPH + H(+). It carries out the reaction (S)-reticuline + reduced [NADPH--hemoprotein reductase] + O2 = 1,2-dehydroreticuline + oxidized [NADPH--hemoprotein reductase] + 2 H2O + H(+). Its pathway is alkaloid biosynthesis; morphine biosynthesis. Functionally, bifunctional protein involved in the biosynthesis of morphinan-type benzylisoquinoline alkaloids. Required for the isomerization of (S)- to (R)-reticuline. The cytochrome P450 module is responsible for the conversion of (S)-reticuline to 1,2-dehydroreticuline while the oxidoreductase module converts 1,2-dehydroreticuline to (R)-reticuline. The polypeptide is Bifunctional protein STORR (Papaver somniferum (Opium poppy)).